Consider the following 241-residue polypeptide: Uridylate kinase (241 aa).

15-18 is an ATP binding site; it reads KLSG. The segment at 23-28 is involved in allosteric activation by GTP; it reads GSEGFG. Gly-57 lines the UMP pocket. Residues Gly-58 and Arg-62 each contribute to the ATP site. Residues Asp-77 and 138–145 each bind UMP; that span reads TGNPFFTT. ATP contacts are provided by Thr-165, Phe-171, and Asp-174.

Belongs to the UMP kinase family. As to quaternary structure, homohexamer.

It is found in the cytoplasm. It carries out the reaction UMP + ATP = UDP + ADP. It functions in the pathway pyrimidine metabolism; CTP biosynthesis via de novo pathway; UDP from UMP (UMPK route): step 1/1. With respect to regulation, allosterically activated by GTP. Inhibited by UTP. Functionally, catalyzes the reversible phosphorylation of UMP to UDP. The sequence is that of Uridylate kinase from Vibrio vulnificus (strain CMCP6).